Consider the following 378-residue polypeptide: SWI/SNF-related matrix-associated actin-dependent regulator of chromatin subfamily B member 1 (378 aa).

Residues 1–106 (MIMALSKTFG…DEKYKAVSIS (106 aa)) are DNA-binding.

Belongs to the SNF5 family. In terms of assembly, component of the multiprotein chromatin-remodeling complexes SWI/SNF. Component of neural progenitors-specific chromatin remodeling complex (npBAF complex) and the neuron-specific chromatin remodeling complex (nBAF complex). Component of the BAF (SWI/SNF) chromatin remodeling complex. Component of the SWI/SNF-B (PBAF) chromatin remodeling complex. Binds to double-stranded DNA.

It is found in the nucleus. Functionally, involved in chromatin-remodeling. Core component of the BAF (SWI/SNF) complex. This ATP-dependent chromatin-remodeling complex plays important roles in cell proliferation and differentiation, in cellular antiviral activities and inhibition of tumor formation. Belongs to the neural progenitors-specific chromatin remodeling complex (npBAF complex) and the neuron-specific chromatin remodeling complex (nBAF complex) and may play a role in neural development. The chain is SWI/SNF-related matrix-associated actin-dependent regulator of chromatin subfamily B member 1 (smarcb1) from Xenopus laevis (African clawed frog).